Here is a 266-residue protein sequence, read N- to C-terminus: uncharacterized protein (266 aa).

This sequence belongs to the chlamydial CPn_0087/CT_309/TC_0583 family.

This is an uncharacterized protein from Chlamydia trachomatis serovar D (strain ATCC VR-885 / DSM 19411 / UW-3/Cx).